The primary structure comprises 1363 residues: ABC multidrug transporter MDR2 (1363 aa).

The chain crosses the membrane as a helical span at residues 65-85; the sequence is IALIVIGTIAGIGAGIPFPLL. Positions 69–367 constitute an ABC transmembrane type-1 1 domain; it reads VIGTIAGIGA…MAPFMHIFAS (299 aa). Asn97 carries N-linked (GlcNAc...) asparagine glycosylation. Transmembrane regions (helical) follow at residues 119-139, 193-213, 215-235, 301-321, and 336-356; these read VLQVIYVSILNFVCMYIHTGC, KVGLFIGTISYFVAAYIVAFL, VATIAAMLMSVVPIYFLMAFG, IQFGMLYFVAYASNALAFWQG, and VSVGAVYTVIFVLLDASFVLS. The region spanning 403-682 is the ABC transporter 1 domain; it reads IELQDVTFNY…DGVYAGMVRL (280 aa). Residue 438 to 445 coordinates ATP; sequence GTSGSGKS. N-linked (GlcNAc...) asparagine glycosylation is found at Asn552 and Asn633. Positions 738–758 are disordered; that stretch reads YMPEEADSLPTEPENEKEKPK. 3 consecutive transmembrane segments (helical) span residues 781–801, 820–840, and 896–916; these read LGLITSIMIGVSYTGEAVIFG, GMLFGLLFFILAIVKFAAVIV, and LTGTTIGVLFSTVANLFAGVI. Residues 781 to 1052 enclose the ABC transmembrane type-1 2 domain; the sequence is LGLITSIMIG…MFALVPDISK (272 aa). The N-linked (GlcNAc...) asparagine glycan is linked to Asn973. The next 2 helical transmembrane spans lie at 992–1012 and 1016–1036; these read FWLSLAYSISTLVYALAYWWG and ILAGMYTQVQFFIVLPALLFS. The ABC transporter 2 domain occupies 1119–1358; that stretch reads VQFRNVHFRY…CESYRANVIH (240 aa). 1154–1161 provides a ligand contact to ATP; that stretch reads GPSGSGKS.

Belongs to the ABC transporter superfamily. ABCB family. Multidrug resistance exporter (TC 3.A.1.201) subfamily.

It localises to the cell membrane. Pleiotropic ABC efflux transporter that may be involved in the modulation susceptibility to a wide range of unrelated cytotoxic compounds. This is ABC multidrug transporter MDR2 from Trichophyton tonsurans (strain CBS 112818) (Scalp ringworm fungus).